We begin with the raw amino-acid sequence, 3054 residues long: Genome polyprotein (3054 aa).

In terms of domain architecture, Peptidase S30 spans 163 to 304; it reads FLPATSLSNV…FAVCHSMTHY (142 aa). Catalysis depends on for P1 proteinase activity residues histidine 214, aspartate 223, and serine 256. The Involved in interaction with stylet and aphid transmission motif lies at 358–361; the sequence is KITC. The short motif at 615–617 is the Involved in virions binding and aphid transmission element; sequence PTK. The Peptidase C6 domain maps to 641-763; that stretch reads MYIANEGYCY…ESEMKTYNVG (123 aa). Catalysis depends on for helper component proteinase activity residues cysteine 649 and histidine 722. A Helicase ATP-binding domain is found at 1234–1386; it reads EISHSPARDF…TQFPVKLKIE (153 aa). ATP is bound at residue 1247-1254; the sequence is GAVGSGKS. A DECH box motif is present at residues 1336–1339; sequence DECH. The region spanning 1401-1564 is the Helicase C-terminal domain; the sequence is GANADVISCG…NLPVTTQSVS (164 aa). A Nuclear localization signal motif is present at residues 1889-1896; the sequence is NKGKRKGT. Position 1911 is an O-(5'-phospho-RNA)-tyrosine (tyrosine 1911). A Peptidase C4 domain is found at 2038–2255; sequence GESLFKGPRD…VLWGGHKVFM (218 aa). Residues histidine 2083, aspartate 2118, and cysteine 2188 each act as for nuclear inclusion protein A activity in the active site. A RdRp catalytic domain is found at 2521-2641; sequence WVYCDADGSQ…AIHPDKAERL (121 aa). The interval 2798–2827 is disordered; that stretch reads GADAGKKKDQKDDKVAEQASKDRDVNAGTS. A compositionally biased stretch (basic and acidic residues) spans 2801 to 2822; sequence AGKKKDQKDDKVAEQASKDRDV. Threonine 3038 carries the post-translational modification Phosphothreonine.

This sequence belongs to the potyviridae genome polyprotein family. In terms of assembly, interacts with host eIF4E protein (via cap-binding region); this interaction mediates the translation of the VPg-viral RNA conjugates. Part of a complex that comprises VPg, RNA, host EIF4E and EIF4G; this interaction mediates the translation of the VPg-viral RNA conjugates. Interaction is possible in susceptible hosts but impaired in resistant plants: the VPg of strain HAT interacts with tomato eIF4E1 and eIF4E2 as well as with Capsicum annuum eIF4E1 susceptible alleles pvr2(+), pvr2(3) and pvr2(9) but not with the resistant allele pvr2(2), the VPg of strain CAA10 interacts with C.annuum eIF4E1 susceptible alleles pvr2(+), pvr2(2), pvr2(3) and pvr2(9), the VPg of strain NW interacts at least with C.annuum eIF4E1. Homodimer; disulfide-linked. Post-translationally, VPg is uridylylated by the polymerase and is covalently attached to the 5'-end of the genomic RNA. This uridylylated form acts as a nucleotide-peptide primer for the polymerase. In terms of processing, potyviral RNA is expressed as two polyproteins which undergo post-translational proteolytic processing. Genome polyprotein is processed by NIa-pro, P1 and HC-pro proteinases resulting in the production of at least ten individual proteins. P3N-PIPO polyprotein is cleaved by P1 and HC-pro proteinases resulting in the production of three individual proteins. The P1 proteinase and the HC-pro cleave only their respective C-termini autocatalytically. 6K1 is essential for proper proteolytic separation of P3 from CI.

Its subcellular location is the host cytoplasmic vesicle. It is found in the host nucleus. The protein resides in the virion. It catalyses the reaction RNA(n) + a ribonucleoside 5'-triphosphate = RNA(n+1) + diphosphate. The catalysed reaction is Hydrolyzes glutaminyl bonds, and activity is further restricted by preferences for the amino acids in P6 - P1' that vary with the species of potyvirus, e.g. Glu-Xaa-Xaa-Tyr-Xaa-Gln-|-(Ser or Gly) for the enzyme from tobacco etch virus. The natural substrate is the viral polyprotein, but other proteins and oligopeptides containing the appropriate consensus sequence are also cleaved.. The enzyme catalyses Hydrolyzes a Gly-|-Gly bond at its own C-terminus, commonly in the sequence -Tyr-Xaa-Val-Gly-|-Gly, in the processing of the potyviral polyprotein.. Required for aphid transmission and also has proteolytic activity. Only cleaves a Gly-Gly dipeptide at its own C-terminus. Interacts with virions and aphid stylets. Acts as a suppressor of RNA-mediated gene silencing, also known as post-transcriptional gene silencing (PTGS), a mechanism of plant viral defense that limits the accumulation of viral RNAs. May have RNA-binding activity. In terms of biological role, has helicase activity. It may be involved in replication. Its function is as follows. Indispensable for virus replication. Reduces the abundance of host transcripts related to jasmonic acid biosynthesis therefore altering the host defenses. In order to increase its own stability, decreases host protein degradation pathways. Functionally, indispensable for virus replication. Mediates the cap-independent, EIF4E-dependent translation of viral genomic RNAs. Binds to the cap-binding site of host EIF4E and thus interferes with the host EIF4E-dependent mRNA export and translation. VPg-RNA directly binds EIF4E and is a template for transcription. Also forms trimeric complexes with EIF4E-EIF4G, which are templates for translation. In terms of biological role, has RNA-binding and proteolytic activities. Its function is as follows. An RNA-dependent RNA polymerase that plays an essential role in the virus replication. Functionally, involved in aphid transmission, cell-to-cell and systemis movement, encapsidation of the viral RNA and in the regulation of viral RNA amplification. The chain is Genome polyprotein from Capsicum annuum (Capsicum pepper).